We begin with the raw amino-acid sequence, 372 residues long: Anhydro-N-acetylmuramic acid kinase (372 aa).

Residue 21–28 (GTSMDGVD) participates in ATP binding.

This sequence belongs to the anhydro-N-acetylmuramic acid kinase family.

It catalyses the reaction 1,6-anhydro-N-acetyl-beta-muramate + ATP + H2O = N-acetyl-D-muramate 6-phosphate + ADP + H(+). The protein operates within amino-sugar metabolism; 1,6-anhydro-N-acetylmuramate degradation. It participates in cell wall biogenesis; peptidoglycan recycling. Catalyzes the specific phosphorylation of 1,6-anhydro-N-acetylmuramic acid (anhMurNAc) with the simultaneous cleavage of the 1,6-anhydro ring, generating MurNAc-6-P. Is required for the utilization of anhMurNAc either imported from the medium or derived from its own cell wall murein, and thus plays a role in cell wall recycling. In Bordetella avium (strain 197N), this protein is Anhydro-N-acetylmuramic acid kinase.